Here is a 498-residue protein sequence, read N- to C-terminus: Cytochrome P450 monooxygenase apdB (498 aa).

Residues 20 to 40 (ASPQVFKLFVLILFVLLVLKI) traverse the membrane as a helical segment. Heme is bound at residue cysteine 457.

Belongs to the cytochrome P450 family. Heme is required as a cofactor.

Its subcellular location is the membrane. It functions in the pathway secondary metabolite biosynthesis. Its function is as follows. Cytochrome P450 monooxygenase; part of the gene cluster that mediates the biosynthesis of aspyridones. The polyketide-amino acid backbone preaspyridone A is first assembled by the PKS-NRPS hybrid apdA. The assembly of preaspyridone A is initiated by loading of malonyl-CoA onto apdA, followed by decarboxylation to yield the acetyl starter unit. The growing polyketide chain then elongates into a tetraketide. The adpA PKS module catalyzes three Claisen condensations, as well as beta-keto processing and methylation. Alpha-methylation step during polyketide synthesis is a prerequisite and a key checkpoint for chain transfer between PKS and NRPS modules. The downstream NRPS module contains the condensation (C), adenylation (A), and thiolation (T) domains and catalyzes the incorporation of tyrosine via the formation of the L-tyrosinyl-thioester and the amide linkage between L-tyrosinyl-thioester and the tetraketide. The bimodular assembly line is terminated with a reductase (R) domain that facilitates formation and release of the tetramic acid product. Because apdA lacks a designated enoylreductase (ER) domain, the required activity is provided the enoyl reductase apdC. ApdC appears to operate with different stereoselectivity in different PKS cycle. Combined with apdC, apdA is proposed to synthesize preaspyridone A via about 20 enzymatic steps. A number of oxidative steps performed successively by the cytochrome P450 monooxygenases apdE and apdB are required for the conversion of preaspyridone A to aspyridone A. The cytochrome P450 monooxygenase apdE is responsible for the oxidative dephenylation of preaspyridone A. Finally, the predicted FAD-dependent monooxygenase apdD and the acyl-CoA dehydrogenase apdG may be involved in the transformation of aspyridone A into aspyridone B. This Emericella nidulans (strain FGSC A4 / ATCC 38163 / CBS 112.46 / NRRL 194 / M139) (Aspergillus nidulans) protein is Cytochrome P450 monooxygenase apdB.